A 481-amino-acid chain; its full sequence is MACRAKELVSLILYKICNPKRSDSKIEEHVEEVEDLKAEAELFRSGSKIEKHVEELEDLKAEAELFRLKAISGTEELKAVADVKRLRTILENNSGTSEECKGEMLKEDLFLPSDLVRLILSRLSFKDNIRSSTVCKAWGDIAASVRVKSRRCWLLYHDAFQDKGVSYGFFDPVEKKKTKEMNLPELSKSSGILYSKDGWLLMNDSLSLIADMYFFNPFTRERIDLPRNRIMESVHTNFAFSCAPTKKSCLVFGINNISSSVAIKISTWRPGATTWLHEDFPNLFPSYFRRLGNILYSDGLFYTASETALGVFDPTARTWNVLPVQPIPMAPRSIRWMTEYEGHIFLVDASSLEPMVYRLNRLESVWEKKETLDGSSIFLSDGSCVMTYGLTGSMSNILYFWSRFINERRSTKSPCPFSRNHPYKYSLYSRSSCEDPEGYYFEYLTWGQKVGVWIEPPHSISIYDYSILDPSEAVNTEYVFI.

Positions 105–156 (LKEDLFLPSDLVRLILSRLSFKDNIRSSTVCKAWGDIAASVRVKSRRCWLLY) constitute an F-box domain.

This is F-box protein At1g49360 from Arabidopsis thaliana (Mouse-ear cress).